A 386-amino-acid chain; its full sequence is Succinate--CoA ligase [ADP-forming] subunit beta (386 aa).

The 236-residue stretch at 9 to 244 (KAVLRSYGVS…LDEEDSKEIE (236 aa)) folds into the ATP-grasp domain. ATP-binding positions include Lys46, 53 to 55 (GRG), Glu99, Cys102, and Glu107. The Mg(2+) site is built by Asn199 and Asp213. Substrate contacts are provided by residues Asn264 and 321–323 (GIM).

It belongs to the succinate/malate CoA ligase beta subunit family. As to quaternary structure, heterotetramer of two alpha and two beta subunits. The cofactor is Mg(2+).

The catalysed reaction is succinate + ATP + CoA = succinyl-CoA + ADP + phosphate. It catalyses the reaction GTP + succinate + CoA = succinyl-CoA + GDP + phosphate. The protein operates within carbohydrate metabolism; tricarboxylic acid cycle; succinate from succinyl-CoA (ligase route): step 1/1. Succinyl-CoA synthetase functions in the citric acid cycle (TCA), coupling the hydrolysis of succinyl-CoA to the synthesis of either ATP or GTP and thus represents the only step of substrate-level phosphorylation in the TCA. The beta subunit provides nucleotide specificity of the enzyme and binds the substrate succinate, while the binding sites for coenzyme A and phosphate are found in the alpha subunit. This Bacillus cereus (strain ATCC 14579 / DSM 31 / CCUG 7414 / JCM 2152 / NBRC 15305 / NCIMB 9373 / NCTC 2599 / NRRL B-3711) protein is Succinate--CoA ligase [ADP-forming] subunit beta.